An 83-amino-acid polypeptide reads, in one-letter code: MCWKPKVKVPKMDTNQIRAAEPAPLTEPPKSVVWGGDDDEDTSVSSSEVPTTPSSGKSSLKVKLDDSAAKNKSKSSIRSKAFG.

The segment at 1–83 (MCWKPKVKVP…KSSIRSKAFG (83 aa)) is disordered. The span at 43–55 (SVSSSEVPTTPSS) shows a compositional bias: low complexity.

This is an uncharacterized protein from Enterobacteria phage T3 (Bacteriophage T3).